A 318-amino-acid polypeptide reads, in one-letter code: Energy-coupling factor transporter ATP-binding protein EcfA2 (318 aa).

Residues 22-271 form the ABC transporter domain; that stretch reads LRAQGLKCVF…PEIMQTTSIA (250 aa). 59–66 is an ATP binding site; it reads GNSGSGKS.

Belongs to the ABC transporter superfamily. Energy-coupling factor EcfA family. Forms a stable energy-coupling factor (ECF) transporter complex composed of 2 membrane-embedded substrate-binding proteins (S component), 2 ATP-binding proteins (A component) and 2 transmembrane proteins (T component).

It is found in the cell membrane. In terms of biological role, ATP-binding (A) component of a common energy-coupling factor (ECF) ABC-transporter complex. Unlike classic ABC transporters this ECF transporter provides the energy necessary to transport a number of different substrates. This chain is Energy-coupling factor transporter ATP-binding protein EcfA2, found in Mycoplasmoides gallisepticum (strain R(low / passage 15 / clone 2)) (Mycoplasma gallisepticum).